The chain runs to 190 residues: Vascular endothelial growth factor A (190 aa).

A signal peptide spans 1–26; sequence MNFLLSWVHWSLALLLYLHHAKWSQA. Cystine bridges form between C51-C93, C82-C127, and C86-C129. An N-linked (GlcNAc...) asparagine glycan is attached at N100.

Belongs to the PDGF/VEGF growth factor family. Homodimer; disulfide-linked. Also found as heterodimer with PGF. Interacts with NRP1. Interacts with BSG. Interacts with CD82; this interaction inhibits VEGFA-mediated signaling pathway.

The protein localises to the secreted. Its function is as follows. Growth factor active in angiogenesis, vasculogenesis and endothelial cell growth. Induces endothelial cell proliferation, promotes cell migration, inhibits apoptosis and induces permeabilization of blood vessels. Binds to the FLT1/VEGFR1 and KDR/VEGFR2 receptors, heparan sulfate and heparin. Binding to NRP1 receptor initiates a signaling pathway needed for motor neuron axon guidance and cell body migration, including for the caudal migration of facial motor neurons from rhombomere 4 to rhombomere 6 during embryonic development. Also binds the DEAR/FBXW7-AS1 receptor. The chain is Vascular endothelial growth factor A (VEGFA) from Sus scrofa (Pig).